A 548-amino-acid chain; its full sequence is 5-aminolevulinate synthase, mitochondrial (548 aa).

The transit peptide at 1–22 (MQRSIFARFGNSSAAVSTLNRL) directs the protein to the mitochondrion. Substrate is bound by residues R91, S204, and K223. Residues S256, H284, and T334 each contribute to the pyridoxal 5'-phosphate site. The active site involves K337. K337 is subject to N6-(pyridoxal phosphate)lysine. T366 and T367 together coordinate pyridoxal 5'-phosphate. T452 contacts substrate.

This sequence belongs to the class-II pyridoxal-phosphate-dependent aminotransferase family. In terms of assembly, homodimer. Interacts with MCX1. It depends on pyridoxal 5'-phosphate as a cofactor.

It is found in the mitochondrion matrix. The catalysed reaction is succinyl-CoA + glycine + H(+) = 5-aminolevulinate + CO2 + CoA. The protein operates within porphyrin-containing compound metabolism; protoporphyrin-IX biosynthesis; 5-aminolevulinate from glycine: step 1/1. Ihnhibited by hemin. Its function is as follows. Catalyzes the synthesis of 5-aminolevulinate (ALA) from succinyl-CoA and glycine, the first and rate-limiting step in heme biosynthesis. In Saccharomyces cerevisiae (strain ATCC 204508 / S288c) (Baker's yeast), this protein is 5-aminolevulinate synthase, mitochondrial.